Consider the following 232-residue polypeptide: Probable metallo-hydrolase M6_Spy0554 (232 aa).

Residues histidine 75, histidine 77, aspartate 79, histidine 80, histidine 155, aspartate 174, and histidine 215 each contribute to the Zn(2+) site.

Zn(2+) serves as cofactor.

This is Probable metallo-hydrolase M6_Spy0554 from Streptococcus pyogenes serotype M6 (strain ATCC BAA-946 / MGAS10394).